Reading from the N-terminus, the 346-residue chain is L-threonine 3-dehydrogenase (346 aa).

Cysteine 42 provides a ligand contact to Zn(2+). Active-site charge relay system residues include threonine 44 and histidine 47. Zn(2+)-binding residues include histidine 67, glutamate 68, cysteine 97, cysteine 100, cysteine 103, and cysteine 111. NAD(+) is bound by residues isoleucine 179, aspartate 199, arginine 204, 266-268, and 291-292; these read LSL and IT.

It belongs to the zinc-containing alcohol dehydrogenase family. In terms of assembly, homotetramer. It depends on Zn(2+) as a cofactor.

Its subcellular location is the cytoplasm. It carries out the reaction L-threonine + NAD(+) = (2S)-2-amino-3-oxobutanoate + NADH + H(+). Its pathway is amino-acid degradation; L-threonine degradation via oxydo-reductase pathway; glycine from L-threonine: step 1/2. Functionally, catalyzes the NAD(+)-dependent oxidation of L-threonine to 2-amino-3-ketobutyrate. The sequence is that of L-threonine 3-dehydrogenase from Bacillus licheniformis (strain ATCC 14580 / DSM 13 / JCM 2505 / CCUG 7422 / NBRC 12200 / NCIMB 9375 / NCTC 10341 / NRRL NRS-1264 / Gibson 46).